A 94-amino-acid polypeptide reads, in one-letter code: Acylphosphatase (94 aa).

Positions 7–94 constitute an Acylphosphatase-like domain; it reads AVQARVYGRV…TAPGDFRIVA (88 aa). Active-site residues include arginine 22 and asparagine 40.

Belongs to the acylphosphatase family.

The enzyme catalyses an acyl phosphate + H2O = a carboxylate + phosphate + H(+). This chain is Acylphosphatase (acyP), found in Mesorhizobium japonicum (strain LMG 29417 / CECT 9101 / MAFF 303099) (Mesorhizobium loti (strain MAFF 303099)).